The chain runs to 308 residues: Transcriptional adapter 1-1 (308 aa).

It belongs to the TADA1 family. Component of the Spt-Ada-Gcn5 acetyltransferase (SAGA) complex consisting of wda/Taf5L, Saf6, Taf9, Taf10b, Taf12, Ada1, Spt3, Spt7, Spt20, Sf3b3, Sf3b5, Nipped-A/Tra1, a histone acetyltransferase (HAT) module made up of Gcn5, Ada2b (Isoform B), Ada3 and Sgf29, and a deubiquitinase (DUB) module made up of not/nonstop, Sgf11 and e(y)2 tethered to SAGA by Atxn7. Not a component of the Ada2a-containing ATAC complex.

Its subcellular location is the nucleus. Its function is as follows. Component of the transcription regulatory complex SAGA, a multiprotein complex that activates transcription by remodeling chromatin and mediating histone acetylation and deubiquitination. The SAGA complex predominantly acetylates histone H3. This is Transcriptional adapter 1-1 from Drosophila melanogaster (Fruit fly).